We begin with the raw amino-acid sequence, 226 residues long: 7-cyano-7-deazaguanine synthase (226 aa).

10 to 20 (LSGGLDSATAA) serves as a coordination point for ATP. Positions 191, 199, 202, and 205 each coordinate Zn(2+).

This sequence belongs to the QueC family. Zn(2+) serves as cofactor.

It carries out the reaction 7-carboxy-7-deazaguanine + NH4(+) + ATP = 7-cyano-7-deazaguanine + ADP + phosphate + H2O + H(+). It functions in the pathway purine metabolism; 7-cyano-7-deazaguanine biosynthesis. In terms of biological role, catalyzes the ATP-dependent conversion of 7-carboxy-7-deazaguanine (CDG) to 7-cyano-7-deazaguanine (preQ(0)). The chain is 7-cyano-7-deazaguanine synthase from Prochlorococcus marinus (strain MIT 9303).